The following is a 168-amino-acid chain: G/U mismatch-specific DNA glycosylase (168 aa).

The protein belongs to the uracil-DNA glycosylase (UDG) superfamily. TDG/mug family. As to quaternary structure, binds DNA as a monomer.

The protein resides in the cytoplasm. It catalyses the reaction Specifically hydrolyzes mismatched double-stranded DNA and polynucleotides, releasing free uracil.. Functionally, excises ethenocytosine and uracil, which can arise by alkylation or deamination of cytosine, respectively, from the corresponding mispairs with guanine in ds-DNA. It is capable of hydrolyzing the carbon-nitrogen bond between the sugar-phosphate backbone of the DNA and the mispaired base. The complementary strand guanine functions in substrate recognition. Required for DNA damage lesion repair in stationary-phase cells. The sequence is that of G/U mismatch-specific DNA glycosylase from Salmonella agona (strain SL483).